A 243-amino-acid chain; its full sequence is Large ribosomal subunit protein uL2 (243 aa).

Over residues 1–12 (MGRRIQGQRRGR) the composition is skewed to basic residues. Disordered regions lie at residues 1–38 (MGRRIQGQRRGRGTSTFRAPSHRYKAELSHKQSESDDT) and 198–243 (VDHP…GSSE). 2 stretches are compositionally biased toward basic and acidic residues: residues 24–34 (YKAELSHKQSE) and 221–231 (PPGRKVGDIAS).

Belongs to the universal ribosomal protein uL2 family. As to quaternary structure, part of the 50S ribosomal subunit. Forms a bridge to the 30S subunit in the 70S ribosome.

One of the primary rRNA binding proteins. Required for association of the 30S and 50S subunits to form the 70S ribosome, for tRNA binding and peptide bond formation. It has been suggested to have peptidyltransferase activity; this is somewhat controversial. Makes several contacts with the 16S rRNA in the 70S ribosome. The chain is Large ribosomal subunit protein uL2 from Haloquadratum walsbyi (strain DSM 16790 / HBSQ001).